The primary structure comprises 1362 residues: DNA-directed RNA polymerase subunit beta (1362 aa).

Belongs to the RNA polymerase beta chain family. The RNAP catalytic core consists of 2 alpha, 1 beta, 1 beta' and 1 omega subunit. When a sigma factor is associated with the core the holoenzyme is formed, which can initiate transcription.

It carries out the reaction RNA(n) + a ribonucleoside 5'-triphosphate = RNA(n+1) + diphosphate. Its function is as follows. DNA-dependent RNA polymerase catalyzes the transcription of DNA into RNA using the four ribonucleoside triphosphates as substrates. The polypeptide is DNA-directed RNA polymerase subunit beta (Acinetobacter baylyi (strain ATCC 33305 / BD413 / ADP1)).